The chain runs to 955 residues: Coiled-coil domain-containing protein 146 (955 aa).

Positions Met1–Asp17 are enriched in acidic residues. The tract at residues Met1–Glu22 is disordered. Coiled coils occupy residues Glu114–Glu141, Gly169–Asn321, Ser400–Met461, Lys534–Ser640, and Asn667–Ala832.

Interacts with CCDC38 and CCDC42. Interacts with intraflagellar transport proteins IFT20 and IFT88. In terms of assembly, (Microbial infection) Interacts with Chlamydia trachomatis incM/YT288. In host cells infected with C.trachomatis incM, CCDC146 is recruited to the periphery of the pathogen-containing vacuole but recruitment is not dependent on incM. As to expression, widely expressed.

The protein localises to the cytoplasm. It localises to the cytoskeleton. The protein resides in the microtubule organizing center. Its subcellular location is the centrosome. It is found in the centriole. The protein localises to the flagellum axoneme. It localises to the cilium basal body. The protein resides in the midbody. Functionally, essential for sperm flagellum biogenesis and male fertility. The chain is Coiled-coil domain-containing protein 146 (CCDC146) from Homo sapiens (Human).